The primary structure comprises 528 residues: uncharacterized protein (528 aa).

An FAD-binding site is contributed by 6–35; that stretch reads DYVVVGTGSAGAVVASRLSTDPATTVVALE. His468 serves as the catalytic Proton acceptor.

It belongs to the GMC oxidoreductase family. It depends on FAD as a cofactor.

This is an uncharacterized protein from Mycobacterium bovis (strain ATCC BAA-935 / AF2122/97).